Reading from the N-terminus, the 156-residue chain is Succinate dehydrogenase assembly factor 2-B, mitochondrial (156 aa).

Residues 1–12 constitute a mitochondrion transit peptide; it reads MLRQILSSAVAK.

The protein belongs to the SDHAF2 family. As to quaternary structure, interacts with the flavoprotein subunit within the SDH catalytic dimer.

The protein resides in the mitochondrion matrix. Plays an essential role in the assembly of succinate dehydrogenase (SDH), an enzyme complex (also referred to as respiratory complex II) that is a component of both the tricarboxylic acid (TCA) cycle and the mitochondrial electron transport chain, and which couples the oxidation of succinate to fumarate with the reduction of ubiquinone (coenzyme Q) to ubiquinol. Required for flavinylation (covalent attachment of FAD) of the flavoprotein subunit of the SDH catalytic dimer. The sequence is that of Succinate dehydrogenase assembly factor 2-B, mitochondrial from Drosophila willistoni (Fruit fly).